Here is a 119-residue protein sequence, read N- to C-terminus: Protein TusC (119 aa).

This sequence belongs to the DsrF/TusC family. In terms of assembly, heterohexamer, formed by a dimer of trimers. The hexameric TusBCD complex contains 2 copies each of TusB, TusC and TusD. The TusBCD complex interacts with TusE.

Its subcellular location is the cytoplasm. In terms of biological role, part of a sulfur-relay system required for 2-thiolation of 5-methylaminomethyl-2-thiouridine (mnm(5)s(2)U) at tRNA wobble positions. The polypeptide is Protein TusC (Escherichia coli O45:K1 (strain S88 / ExPEC)).